The chain runs to 300 residues: Non-secreted LysM effector LysM16 (300 aa).

Residues 176-222 (EWHTVFSGDTCQLIEAEYGITLEKFIALNTYVNSTCGNIWPDYAYCV) enclose the LysM domain.

The protein belongs to the secreted LysM effector family.

Its function is as follows. Non-secreted LysM effector that might be involved in manipulation of host defenses for successful infection. The sequence is that of Non-secreted LysM effector LysM16 from Penicillium expansum (Blue mold rot fungus).